Consider the following 312-residue polypeptide: Aspartoacylase (312 aa).

Zn(2+)-binding residues include His20 and Glu23. Residues Arg62, Asn69, and Arg70 each coordinate N-acetyl-L-aspartate. A Zn(2+)-binding site is contributed by His115. The N-acetyl-L-aspartate site is built by Tyr163 and Arg167. The active-site Proton donor/acceptor is Glu177. Residue Tyr287 participates in N-acetyl-L-aspartate binding.

The protein belongs to the AspA/AstE family. Aspartoacylase subfamily. As to quaternary structure, homodimer. Zn(2+) is required as a cofactor.

It is found in the cytoplasm. It localises to the nucleus. It carries out the reaction an N-acyl-L-aspartate + H2O = a carboxylate + L-aspartate. It catalyses the reaction N-acetyl-L-aspartate + H2O = L-aspartate + acetate. Catalyzes the deacetylation of N-acetylaspartic acid (NAA) to produce acetate and L-aspartate. NAA occurs in high concentration in brain and its hydrolysis NAA plays a significant part in the maintenance of intact white matter. In other tissues it acts as a scavenger of NAA from body fluids. This Mus musculus (Mouse) protein is Aspartoacylase.